We begin with the raw amino-acid sequence, 443 residues long: Thymidine phosphorylase (443 aa).

It belongs to the thymidine/pyrimidine-nucleoside phosphorylase family. In terms of assembly, homodimer.

The enzyme catalyses thymidine + phosphate = 2-deoxy-alpha-D-ribose 1-phosphate + thymine. Its pathway is pyrimidine metabolism; dTMP biosynthesis via salvage pathway; dTMP from thymine: step 1/2. Functionally, the enzymes which catalyze the reversible phosphorolysis of pyrimidine nucleosides are involved in the degradation of these compounds and in their utilization as carbon and energy sources, or in the rescue of pyrimidine bases for nucleotide synthesis. The sequence is that of Thymidine phosphorylase from Shewanella sp. (strain MR-7).